An 807-amino-acid chain; its full sequence is Protein WEAK CHLOROPLAST MOVEMENT UNDER BLUE LIGHT 1 (807 aa).

The interval 1-162 is disordered; the sequence is MEDLKTVEAS…GTPKNVDSHR (162 aa). Over residues 31–40 the composition is skewed to polar residues; the sequence is RESNIQSATK. The segment covering 46 to 73 has biased composition (low complexity); it reads QSQTDTEETQQSQTDTEETQQSQTDDTT. Over residues 138 to 157 the composition is skewed to polar residues; that stretch reads RTVSSPRFSGSPVSTGTPKN. Phosphoserine is present on Ser-148. Coiled coils occupy residues 191-429, 457-489, 516-621, and 664-724; these read RMQA…ELVA, DLHA…LKLA, IAVA…ALEE, and AAVS…WRAE. Disordered stretches follow at residues 532–565 and 722–789; these read IASV…EAKS and RAEH…KKKK. Composition is skewed to basic and acidic residues over residues 537–548, 722–732, and 739–749; these read SKEKDAREKMVE, RAEHEQKRKAG, and KNLKESFEGGK. Residues 761–781 show a composition bias toward polar residues; that stretch reads SSPSESYGTEENSETNLSPQT.

The protein belongs to the WEB family. In terms of assembly, interacts with PMI2. In terms of tissue distribution, ubiquitous but preferentially in chloroplast-containing tissues.

It localises to the cytoplasm. Functionally, required for the chloroplast avoidance response under high intensity blue light. This avoidance response consists in the relocation of chloroplasts on the anticlinal side of exposed cells. Acts in association with PMI2 to maintain the velocity of chloroplast photorelocation movement via cp-actin filaments regulation. The sequence is that of Protein WEAK CHLOROPLAST MOVEMENT UNDER BLUE LIGHT 1 (WEB1) from Arabidopsis thaliana (Mouse-ear cress).